The primary structure comprises 249 residues: MTRKLVLLRHGQSQWNLDNRFTGWVDVELTDQGRQEAVAAGKLMKDEGLQFDVAHTSVLKRAIHTLQGALKELDQDWLPVSKSWRLNERHYGGLQGLDKAETAAKHGEEQVKIWRRSYDIPPPAMDVDDPGHPCHDRRYATLDRNALPGTESLATTLVRVLPYWHDAIAPQLKAGQTVLVTAHGNSLRALYKYLNDVSNEQILELNIPTGIPLLFELDDNLQVRSFRYLGDPEAAKRAAEAVANQGKAK.

Substrate is bound by residues 9–16 (RHGQSQWN), 22–23 (TG), Arg-61, 88–91 (ERHY), Lys-99, 115–116 (RR), and 184–185 (GN). The active-site Tele-phosphohistidine intermediate is His-10. Glu-88 acts as the Proton donor/acceptor in catalysis.

The protein belongs to the phosphoglycerate mutase family. BPG-dependent PGAM subfamily. As to quaternary structure, homodimer.

It catalyses the reaction (2R)-2-phosphoglycerate = (2R)-3-phosphoglycerate. Its pathway is carbohydrate degradation; glycolysis; pyruvate from D-glyceraldehyde 3-phosphate: step 3/5. Catalyzes the interconversion of 2-phosphoglycerate and 3-phosphoglycerate. The polypeptide is 2,3-bisphosphoglycerate-dependent phosphoglycerate mutase (Xanthomonas oryzae pv. oryzae (strain MAFF 311018)).